We begin with the raw amino-acid sequence, 97 residues long: Large ribosomal subunit protein eL21 (97 aa).

The segment covering 1 to 24 (MVQKAHSFRRKTRKKLRKHPRRRG) has biased composition (basic residues). The segment at 1 to 25 (MVQKAHSFRRKTRKKLRKHPRRRGL) is disordered.

This sequence belongs to the eukaryotic ribosomal protein eL21 family.

This is Large ribosomal subunit protein eL21 (rpl21e) from Pyrococcus abyssi (strain GE5 / Orsay).